A 445-amino-acid chain; its full sequence is Inositol-pentakisphosphate 2-kinase IPK1 (445 aa).

ATP-binding positions include 19-22 and R40; that span reads GAAN. R127 is a binding site for substrate. Residues 144 to 146 and 162 to 164 contribute to the ATP site; these read SDH and EIK. Residues 162–166 carry the EXKPK motif motif; the sequence is EIKAK. K166, K196, and N234 together coordinate substrate. R237 provides a ligand contact to ATP. Positions 312, 322, 325, and 341 each coordinate Zn(2+). D363 contributes to the substrate binding site. ATP is bound at residue D402. The substrate site is built by K406, K410, and Y414.

This sequence belongs to the IPK1 type 2 family. It depends on Zn(2+) as a cofactor.

The catalysed reaction is 1D-myo-inositol 1,3,4,5,6-pentakisphosphate + ATP = 1D-myo-inositol hexakisphosphate + ADP + H(+). Functionally, phosphorylates Ins(1,3,4,5,6)P5 at position 2 to form Ins(1,2,3,4,5,6)P6 (InsP6 or phytate). Phytate is a regulator of intracellular signaling, a highly abundant animal antinutrient, and a phosphate store in plant seeds. Also phosphorylates Ins(1,3,4,6)P4 and Ins(1,4,5,6)P4 to produce Ins(1,2,3,4,6)P5 and Ins(1,2,4,5,6)P5. This Oryza sativa subsp. indica (Rice) protein is Inositol-pentakisphosphate 2-kinase IPK1.